Consider the following 133-residue polypeptide: Small ribosomal subunit protein uS8 (133 aa).

Belongs to the universal ribosomal protein uS8 family. Part of the 30S ribosomal subunit. Contacts proteins S5 and S12.

In terms of biological role, one of the primary rRNA binding proteins, it binds directly to 16S rRNA central domain where it helps coordinate assembly of the platform of the 30S subunit. This is Small ribosomal subunit protein uS8 from Cyanothece sp. (strain PCC 7425 / ATCC 29141).